The chain runs to 422 residues: Serine--tRNA ligase (422 aa).

231–233 (TSE) contacts L-serine. ATP is bound at residue 262–264 (RQE). E285 contacts L-serine. 349-352 (EISS) lines the ATP pocket. S384 serves as a coordination point for L-serine.

Belongs to the class-II aminoacyl-tRNA synthetase family. Type-1 seryl-tRNA synthetase subfamily. As to quaternary structure, homodimer. The tRNA molecule binds across the dimer.

The protein resides in the cytoplasm. It catalyses the reaction tRNA(Ser) + L-serine + ATP = L-seryl-tRNA(Ser) + AMP + diphosphate + H(+). It carries out the reaction tRNA(Sec) + L-serine + ATP = L-seryl-tRNA(Sec) + AMP + diphosphate + H(+). It participates in aminoacyl-tRNA biosynthesis; selenocysteinyl-tRNA(Sec) biosynthesis; L-seryl-tRNA(Sec) from L-serine and tRNA(Sec): step 1/1. In terms of biological role, catalyzes the attachment of serine to tRNA(Ser). Is also able to aminoacylate tRNA(Sec) with serine, to form the misacylated tRNA L-seryl-tRNA(Sec), which will be further converted into selenocysteinyl-tRNA(Sec). This is Serine--tRNA ligase from Mycoplasma mycoides subsp. mycoides SC (strain CCUG 32753 / NCTC 10114 / PG1).